We begin with the raw amino-acid sequence, 121 residues long: Large ribosomal subunit protein bL19 (121 aa).

This sequence belongs to the bacterial ribosomal protein bL19 family.

Its function is as follows. This protein is located at the 30S-50S ribosomal subunit interface and may play a role in the structure and function of the aminoacyl-tRNA binding site. The sequence is that of Large ribosomal subunit protein bL19 from Amoebophilus asiaticus (strain 5a2).